A 434-amino-acid polypeptide reads, in one-letter code: Chaperone SurA (434 aa).

Positions 1–22 (MKPSKHLIFALFALAISQPTMA) are cleaved as a signal peptide. PpiC domains lie at 173–274 (DVEY…KIMD) and 283–383 (IEEV…QLEE).

The protein localises to the periplasm. The enzyme catalyses [protein]-peptidylproline (omega=180) = [protein]-peptidylproline (omega=0). Its function is as follows. Chaperone involved in the correct folding and assembly of outer membrane proteins. Recognizes specific patterns of aromatic residues and the orientation of their side chains, which are found more frequently in integral outer membrane proteins. May act in both early periplasmic and late outer membrane-associated steps of protein maturation. This Shewanella oneidensis (strain ATCC 700550 / JCM 31522 / CIP 106686 / LMG 19005 / NCIMB 14063 / MR-1) protein is Chaperone SurA.